The chain runs to 217 residues: Probable transaldolase (217 aa).

Catalysis depends on Lys-83, which acts as the Schiff-base intermediate with substrate.

Belongs to the transaldolase family. Type 3B subfamily.

The protein resides in the cytoplasm. The catalysed reaction is D-sedoheptulose 7-phosphate + D-glyceraldehyde 3-phosphate = D-erythrose 4-phosphate + beta-D-fructose 6-phosphate. The protein operates within carbohydrate degradation; pentose phosphate pathway; D-glyceraldehyde 3-phosphate and beta-D-fructose 6-phosphate from D-ribose 5-phosphate and D-xylulose 5-phosphate (non-oxidative stage): step 2/3. In terms of biological role, transaldolase is important for the balance of metabolites in the pentose-phosphate pathway. The chain is Probable transaldolase from Clostridium botulinum (strain Okra / Type B1).